We begin with the raw amino-acid sequence, 694 residues long: ATP-dependent RNA helicase DHX33 (694 aa).

A Helicase ATP-binding domain is found at 78–246; the sequence is LKELEANDTV…FNCKGMYLEG (169 aa). An ATP-binding site is contributed by 91-98; the sequence is SETGSGKT. A DEAH box motif is present at residues 188–191; sequence DEAH. The 174-residue stretch at 270-443 folds into the Helicase C-terminal domain; sequence TLFHIHRTTP…SMVLQLLALD (174 aa).

The protein belongs to the DEAD box helicase family. DEAH subfamily.

It is found in the nucleus. The protein resides in the nucleolus. The enzyme catalyses ATP + H2O = ADP + phosphate + H(+). In terms of biological role, part of a translational control module, also containing pths/DDX47 and ais/DDX52, which coordinates germline stem cell differentiation with ribosome biogenesis during oogenesis. This module allows for coregulation of ribosomal proteins and non1/GTPBP4, a p53 repressor, preventing p53 stabilization, cell cycle arrest and loss of stem cell differentiation. The chain is ATP-dependent RNA helicase DHX33 from Drosophila melanogaster (Fruit fly).